The sequence spans 345 residues: MHFLSQNDLNINLIPHLCLHRHSVIAGAFTIHRHMKIFNSPSNSSTFTGFILLGFPCPREGQILLFVLFTVVYLLTLMGNGSIICAVHWDQRLHAPMYILLANFSFLEICYVTSTVPSMLANFLSDTKIISFSGCFLQFYFFFSLGSTECFFLAVMAFDRYLAICRPLRYPTIMTRRLCTNLVVNCWVLGFIWFLIPIVNISQMSFCGSRIIDHFLCDPAPLLTLTCKKGPVIELVFSVLSPLPVFMLFLFIVGSYALVVRAVLRVPSAAGRRKAFSTCGSHLAVVSLFYGSVLVMYGSPPSKNEAGKQKTVTLFYSVVTPLLNPVIYSLRNKDMRKALKKFWGT.

The Extracellular segment spans residues 1–62 (MHFLSQNDLN…LGFPCPREGQ (62 aa)). N43 carries N-linked (GlcNAc...) asparagine glycosylation. The helical transmembrane segment at 63–83 (ILLFVLFTVVYLLTLMGNGSI) threads the bilayer. Residues 84–92 (ICAVHWDQR) lie on the Cytoplasmic side of the membrane. The helical transmembrane segment at 93 to 113 (LHAPMYILLANFSFLEICYVT) threads the bilayer. Residues 114 to 135 (STVPSMLANFLSDTKIISFSGC) lie on the Extracellular side of the membrane. A disulfide bridge connects residues C135 and C217. A helical membrane pass occupies residues 136–156 (FLQFYFFFSLGSTECFFLAVM). Residues 157-181 (AFDRYLAICRPLRYPTIMTRRLCTN) are Cytoplasmic-facing. A helical transmembrane segment spans residues 182–202 (LVVNCWVLGFIWFLIPIVNIS). Residues 203 to 241 (QMSFCGSRIIDHFLCDPAPLLTLTCKKGPVIELVFSVLS) lie on the Extracellular side of the membrane. The chain crosses the membrane as a helical span at residues 242–264 (PLPVFMLFLFIVGSYALVVRAVL). Over 265–275 (RVPSAAGRRKA) the chain is Cytoplasmic. The chain crosses the membrane as a helical span at residues 276–296 (FSTCGSHLAVVSLFYGSVLVM). Residues 297–309 (YGSPPSKNEAGKQ) lie on the Extracellular side of the membrane. A helical membrane pass occupies residues 310–330 (KTVTLFYSVVTPLLNPVIYSL). Residues 331–345 (RNKDMRKALKKFWGT) are Cytoplasmic-facing.

Belongs to the G-protein coupled receptor 1 family.

The protein resides in the cell membrane. Its function is as follows. Odorant receptor. The polypeptide is Olfactory receptor 11G2 (OR11G2) (Homo sapiens (Human)).